The primary structure comprises 604 residues: BTB/POZ domain-containing protein SR1IP1 (604 aa).

Residues Ser-27–Thr-96 enclose the BTB domain. The NPH3 domain maps to Asp-201 to Arg-474. Tyr-415 carries the post-translational modification Phosphotyrosine. 2 disordered regions span residues Glu-478–Pro-499 and Phe-532–Ser-604. A coiled-coil region spans residues Lys-500–Ser-541. Residues Ser-541–Thr-558 show a composition bias toward low complexity. A compositionally biased stretch (basic residues) spans Gly-591 to Ser-604.

This sequence belongs to the NPH3 family. Interacts with CAMTA3 and CUL3A.

Its pathway is protein modification; protein ubiquitination. Its function is as follows. Acts as a substrate-specific adapter of an E3 ubiquitin-protein ligase complex (CUL3-RBX1-BTB) which mediates the ubiquitination and subsequent proteasomal degradation of target proteins. Involved in disease resistance. Acts as a substrate adapter that recruits CAMTA3/SR1 for ubiquitination and degradation during pathogen infection. Acts as a positive regulator of plant defense by removing the defense suppressor CAMTA3/SR1. The protein is BTB/POZ domain-containing protein SR1IP1 of Arabidopsis thaliana (Mouse-ear cress).